A 185-amino-acid polypeptide reads, in one-letter code: Elongation factor P (185 aa).

It belongs to the elongation factor P family.

Its subcellular location is the cytoplasm. The protein operates within protein biosynthesis; polypeptide chain elongation. Involved in peptide bond synthesis. Stimulates efficient translation and peptide-bond synthesis on native or reconstituted 70S ribosomes in vitro. Probably functions indirectly by altering the affinity of the ribosome for aminoacyl-tRNA, thus increasing their reactivity as acceptors for peptidyl transferase. This chain is Elongation factor P, found in Streptococcus pyogenes serotype M49 (strain NZ131).